The following is a 287-amino-acid chain: Nucleotide-binding protein VP2673 (287 aa).

8-15 (GHSGAGKS) provides a ligand contact to ATP. Position 56–59 (56–59 (DIRN)) interacts with GTP.

It belongs to the RapZ-like family.

Functionally, displays ATPase and GTPase activities. The polypeptide is Nucleotide-binding protein VP2673 (Vibrio parahaemolyticus serotype O3:K6 (strain RIMD 2210633)).